A 211-amino-acid chain; its full sequence is MNEGEILFQFTTWLIFLISYLIGSIPFGLLLTKLAKLGDVRTIGSGNIGATNVLRTGNKKVAALTLLCDILKGTLVILVIKFLTDPIENNIFISLAGFFAFLGHLFPVWLKFKGGKGVATYLGVCLGLYWPAAIVFITAWIVLFLITRYSSLSALIAVIITPIFVHFSYPYLYAHCILVIMSLLVMIKHHANIGRLLVGKESKIGTQNGGK.

The next 5 membrane-spanning stretches (helical) occupy residues 10–30, 63–83, 90–110, 126–146, and 152–172; these read FTTW…FGLL, ALTL…IKFL, NIFI…PVWL, LGLY…LFLI, and LSAL…YPYL.

It belongs to the PlsY family. As to quaternary structure, probably interacts with PlsX.

Its subcellular location is the cell inner membrane. The catalysed reaction is an acyl phosphate + sn-glycerol 3-phosphate = a 1-acyl-sn-glycero-3-phosphate + phosphate. It functions in the pathway lipid metabolism; phospholipid metabolism. Its function is as follows. Catalyzes the transfer of an acyl group from acyl-phosphate (acyl-PO(4)) to glycerol-3-phosphate (G3P) to form lysophosphatidic acid (LPA). This enzyme utilizes acyl-phosphate as fatty acyl donor, but not acyl-CoA or acyl-ACP. This chain is Glycerol-3-phosphate acyltransferase, found in Bartonella henselae (strain ATCC 49882 / DSM 28221 / CCUG 30454 / Houston 1) (Rochalimaea henselae).